Here is a 196-residue protein sequence, read N- to C-terminus: Putative 3-methyladenine DNA glycosylase (196 aa).

This sequence belongs to the DNA glycosylase MPG family.

This is Putative 3-methyladenine DNA glycosylase (yxlJ) from Bacillus subtilis (strain 168).